The sequence spans 285 residues: Nucleotide-binding protein PFL_0912 (285 aa).

8–15 contributes to the ATP binding site; sequence GRSGSGKS. 60-63 provides a ligand contact to GTP; that stretch reads DARN.

The protein belongs to the RapZ-like family.

Displays ATPase and GTPase activities. The polypeptide is Nucleotide-binding protein PFL_0912 (Pseudomonas fluorescens (strain ATCC BAA-477 / NRRL B-23932 / Pf-5)).